A 361-amino-acid chain; its full sequence is 3-dehydroquinate synthase (361 aa).

NAD(+) is bound by residues 71-76, 105-109, 129-130, Lys142, Lys151, and 169-172; these read DGEQFK, GVIGD, TT, and CLQT. The Zn(2+) site is built by Glu184, His247, and His264.

This sequence belongs to the sugar phosphate cyclases superfamily. Dehydroquinate synthase family. It depends on Co(2+) as a cofactor. Zn(2+) is required as a cofactor. Requires NAD(+) as cofactor.

It is found in the cytoplasm. It catalyses the reaction 7-phospho-2-dehydro-3-deoxy-D-arabino-heptonate = 3-dehydroquinate + phosphate. Its pathway is metabolic intermediate biosynthesis; chorismate biosynthesis; chorismate from D-erythrose 4-phosphate and phosphoenolpyruvate: step 2/7. Catalyzes the conversion of 3-deoxy-D-arabino-heptulosonate 7-phosphate (DAHP) to dehydroquinate (DHQ). In Edwardsiella ictaluri (strain 93-146), this protein is 3-dehydroquinate synthase.